The chain runs to 117 residues: Prefoldin subunit beta (117 aa).

The protein belongs to the prefoldin subunit beta family. As to quaternary structure, heterohexamer of two alpha and four beta subunits.

Its subcellular location is the cytoplasm. Its function is as follows. Molecular chaperone capable of stabilizing a range of proteins. Seems to fulfill an ATP-independent, HSP70-like function in archaeal de novo protein folding. The polypeptide is Prefoldin subunit beta (Methanosarcina mazei (strain ATCC BAA-159 / DSM 3647 / Goe1 / Go1 / JCM 11833 / OCM 88) (Methanosarcina frisia)).